The following is a 209-amino-acid chain: Pyroglutamyl-peptidase 1 (209 aa).

Catalysis depends on residues E85, C149, and H168.

The protein belongs to the peptidase C15 family. In terms of assembly, monomer.

It localises to the cytoplasm. It catalyses the reaction Release of an N-terminal pyroglutamyl group from a polypeptide, the second amino acid generally not being Pro.. Functionally, removes 5-oxoproline from various penultimate amino acid residues except L-proline. This is Pyroglutamyl-peptidase 1 (Pgpep1) from Rattus norvegicus (Rat).